We begin with the raw amino-acid sequence, 183 residues long: Threonylcarbamoyl-AMP synthase (183 aa).

Residues 1-183 (MNREQIADAL…LRTNQLFRQG (183 aa)) enclose the YrdC-like domain.

It belongs to the SUA5 family. TsaC subfamily.

The protein localises to the cytoplasm. It catalyses the reaction L-threonine + hydrogencarbonate + ATP = L-threonylcarbamoyladenylate + diphosphate + H2O. In terms of biological role, required for the formation of a threonylcarbamoyl group on adenosine at position 37 (t(6)A37) in tRNAs that read codons beginning with adenine. Catalyzes the conversion of L-threonine, HCO(3)(-)/CO(2) and ATP to give threonylcarbamoyl-AMP (TC-AMP) as the acyladenylate intermediate, with the release of diphosphate. The protein is Threonylcarbamoyl-AMP synthase of Haemophilus influenzae (strain ATCC 51907 / DSM 11121 / KW20 / Rd).